The chain runs to 554 residues: 3-(3-hydroxy-phenyl)propionate/3-hydroxycinnamic acid hydroxylase (554 aa).

FAD is bound by residues 17 to 46 (QVAI…VVEK) and 285 to 295 (FRIDRVLLAGD).

The protein belongs to the PheA/TfdB FAD monooxygenase family. FAD is required as a cofactor.

The enzyme catalyses 3-(3-hydroxyphenyl)propanoate + NADH + O2 + H(+) = 3-(2,3-dihydroxyphenyl)propanoate + NAD(+) + H2O. The catalysed reaction is (2E)-3-(3-hydroxyphenyl)prop-2-enoate + NADH + O2 + H(+) = (2E)-3-(2,3-dihydroxyphenyl)prop-2-enoate + NAD(+) + H2O. It functions in the pathway aromatic compound metabolism; 3-phenylpropanoate degradation. Catalyzes the insertion of one atom of molecular oxygen into position 2 of the phenyl ring of 3-(3-hydroxyphenyl)propionate (3-HPP) and hydroxycinnamic acid (3HCI). This is 3-(3-hydroxy-phenyl)propionate/3-hydroxycinnamic acid hydroxylase from Escherichia coli O157:H7.